Reading from the N-terminus, the 226-residue chain is MAKKKAFTSLPYLASIVFLPWWISLSFNKWLESWVTNWWNTRQSETFLNDIQEKNILEKFIELEELFLLDEMIKEYPETHIQRRIHKETIQLVKMHNESHIHTILHLSTNIICFAILSGYSILGNEGLFILNSWVQEFLYNLSDTIKAFSILLLTDLCIGFHSPHGWELMIGSVYKDFGFAHNDQIISGLVSTFPVILDTILKYWIFRYLNRVSPSLVVIYHSMND.

Transmembrane regions (helical) follow at residues 7–27 (FTSL…SLSF), 111–131 (IICF…LFIL), and 186–206 (IISG…KYWI).

It belongs to the CemA family.

The protein localises to the plastid. The protein resides in the chloroplast inner membrane. The catalysed reaction is K(+)(in) + H(+)(out) = K(+)(out) + H(+)(in). In terms of biological role, contributes to K(+)/H(+) antiport activity by supporting proton efflux to control proton extrusion and homeostasis in chloroplasts in a light-dependent manner to modulate photosynthesis. Prevents excessive induction of non-photochemical quenching (NPQ) under continuous-light conditions. Indirectly promotes efficient inorganic carbon uptake into chloroplasts. The polypeptide is Potassium/proton antiporter CemA (Buxus microphylla (Littleleaf boxwood)).